Consider the following 488-residue polypeptide: E3 ubiquitin-protein ligase TRIM39 (488 aa).

The RING-type zinc finger occupies 29 to 70 (CSVCLEYLKEPVIIECGHNFCKACITRWWEDLERDFPCPVCR). The segment at 102–143 (RDESLCSQHHEPLSLFCYEDQEAVCLICAISHTHRAHTVVPM) adopts a B box-type zinc-finger fold. Zn(2+) contacts are provided by cysteine 107, histidine 110, cysteine 129, and histidine 135. The stretch at 181-250 (ELKRLVESRR…AHLAAEVEGK (70 aa)) forms a coiled coil. 2 interaction with CDKN1A regions span residues 268-307 (KCEK…QLIA) and 359-488 (TSGR…TDWE). Positions 289–484 (SHFPRQYFAL…NAAPLTIRPP (196 aa)) constitute a B30.2/SPRY domain.

Belongs to the TRIM/RBCC family. As to quaternary structure, interacts with MOAP1. Interacts with CDKN1A. Post-translationally, autoubiquitinated.

The protein localises to the cytoplasm. It localises to the cytosol. The protein resides in the mitochondrion. It is found in the nucleus. It carries out the reaction S-ubiquitinyl-[E2 ubiquitin-conjugating enzyme]-L-cysteine + [acceptor protein]-L-lysine = [E2 ubiquitin-conjugating enzyme]-L-cysteine + N(6)-ubiquitinyl-[acceptor protein]-L-lysine.. The protein operates within protein modification; protein ubiquitination. Its function is as follows. E3 ubiquitin-protein ligase. May facilitate apoptosis by inhibiting APC/C-Cdh1-mediated poly-ubiquitination and subsequent proteasome-mediated degradation of the pro-apoptotic protein MOAP1. Regulates the G1/S transition of the cell cycle and DNA damage-induced G2 arrest by stabilizing CDKN1A/p21. Positively regulates CDKN1A/p21 stability by competing with DTL for CDKN1A/p21 binding, therefore disrupting DCX(DTL) E3 ubiquitin ligase complex-mediated CDKN1A/p21 ubiquitination and degradation. In Rattus norvegicus (Rat), this protein is E3 ubiquitin-protein ligase TRIM39 (Trim39).